Reading from the N-terminus, the 214-residue chain is Adenylate kinase (214 aa).

ATP is bound at residue 10–15 (GAGKGT). An NMP region spans residues 30–59 (STGDMLRAAVKAGSELGLKAKEIMDAGKLV). Residues T31, R36, 57–59 (KLV), 85–88 (GFPR), and Q92 each bind AMP. Residues 122 to 159 (GRRVHAPSGRVYHVTFNPPRVEGKDDMTGEELTTRKDD) are LID. ATP-binding positions include R123 and 132-133 (VY). AMP is bound by residues R156 and R167. Position 200 (R200) interacts with ATP.

It belongs to the adenylate kinase family. Monomer.

It is found in the cytoplasm. It carries out the reaction AMP + ATP = 2 ADP. It participates in purine metabolism; AMP biosynthesis via salvage pathway; AMP from ADP: step 1/1. Catalyzes the reversible transfer of the terminal phosphate group between ATP and AMP. Plays an important role in cellular energy homeostasis and in adenine nucleotide metabolism. This Erwinia tasmaniensis (strain DSM 17950 / CFBP 7177 / CIP 109463 / NCPPB 4357 / Et1/99) protein is Adenylate kinase.